A 242-amino-acid polypeptide reads, in one-letter code: UPF0309 protein Oant_1457 (242 aa).

The SIS domain maps to 30 to 214 (AAELITAAAL…AKLVGKGDAP (185 aa)).

It belongs to the UPF0309 family.

The chain is UPF0309 protein Oant_1457 from Brucella anthropi (strain ATCC 49188 / DSM 6882 / CCUG 24695 / JCM 21032 / LMG 3331 / NBRC 15819 / NCTC 12168 / Alc 37) (Ochrobactrum anthropi).